The primary structure comprises 455 residues: Phosphoglycerate kinase, glycosomal (455 aa).

Val-23, Asp-24, Phe-25, Asn-26, Arg-39, Ser-61, His-62, Gly-64, Arg-65, Arg-132, His-168, and Arg-169 together coordinate (2R)-3-phosphoglycerate. Residues Gly-214 and Ala-215 each contribute to the ADP site. A CDP-binding site is contributed by Gly-214. Residues Ala-215 and Lys-216 each contribute to the AMP site. Ala-215 contributes to the ATP binding site. Ala-215 serves as a coordination point for Mg(2+). Lys-216 is a (2R)-3-phosphoglycerate binding site. Asp-219 is a CDP binding site. Residue Asp-219 participates in Mg(2+) binding. Positions 220 and 238 each coordinate ADP. Position 220 (Lys-220) interacts with AMP. Lys-220 contacts ATP. Position 238 (Gly-238) interacts with CDP. Residues Ala-239 and Ala-311 each contribute to the AMP site. ATP is bound by residues Ala-239 and Ala-311. The ADP site is built by Ala-311 and Asn-335. Positions 336 and 341 each coordinate CDP. ADP is bound by residues Phe-341, Glu-342, Asp-374, and Thr-375. Residue Glu-342 participates in AMP binding. Residues Glu-342, Asp-374, and Thr-375 each contribute to the ATP site. Asp-374 provides a ligand contact to Mg(2+). Residues 417 to 455 are topogenic signal; the sequence is DAKAPAAAAAAGGDCPCGSGCAAVPAAATATVSMVLASP.

It belongs to the phosphoglycerate kinase family. In terms of assembly, monomer. The cofactor is Mg(2+).

The protein localises to the glycosome. It catalyses the reaction (2R)-3-phosphoglycerate + ATP = (2R)-3-phospho-glyceroyl phosphate + ADP. It functions in the pathway carbohydrate degradation; glycolysis; pyruvate from D-glyceraldehyde 3-phosphate: step 2/5. In Crithidia fasciculata, this protein is Phosphoglycerate kinase, glycosomal (PGKC).